Here is a 594-residue protein sequence, read N- to C-terminus: MADLLSSLKNLPNSSGVYQYFDKNRQLLYIGKAKNLKKRIKSYFSIRNNEITPNHRASLRIQMMVKQIAFLETILVENEQDALILENSLIKQLKPKYNILLRDDKTYPYIYMDFSTDFPIPLITRKILKQPGVKYFGPFTSGAKDILDSLYELLPLVQKKNCIKDKKACIFYQIERCKAPCENKITKEEYLKIAKECLEMIENKDRLIKELELKMERLSNNLRFEEALIYRDRIAKIQKIAPFTCMDLAKLYDLDIFAFYGASNKAVLVKMFMRGGKIISSAFEKIHSLNGFDTDEAMKQAIINHYQSHLPLMPEQILLNACSNETLKELQEFISHQYSKKIALSIPKKGDKLALIEIAMKNAQEIFSQEKTSNEDLILEEARSLFKLECMPYRVEIFDTSHHSSSQCVGGMVVYENNAFQKNSYRRYHLKGSDEYTQMSELLTRRALDFAKEPPPNLWVIDGGRAQLNIALEILKSSGSFVEVIAISKEKRDSKAYRSKGGAKDIIHTPSDTFKLLPSDKRLQWVQKLRDESHRYAINFHRSTKLKNMKQIALLKEKGIGEASVKKLLDYFGSFEAIEKASEQEKNAVLKKRI.

One can recognise a GIY-YIG domain in the interval N13 to I99. Residues D205–I240 form the UVR domain.

The protein belongs to the UvrC family. Interacts with UvrB in an incision complex.

It localises to the cytoplasm. Its function is as follows. The UvrABC repair system catalyzes the recognition and processing of DNA lesions. UvrC both incises the 5' and 3' sides of the lesion. The N-terminal half is responsible for the 3' incision and the C-terminal half is responsible for the 5' incision. This is UvrABC system protein C from Helicobacter pylori (strain ATCC 700392 / 26695) (Campylobacter pylori).